We begin with the raw amino-acid sequence, 149 residues long: Large ribosomal subunit protein bL9 (149 aa).

The protein belongs to the bacterial ribosomal protein bL9 family.

Binds to the 23S rRNA. In Edwardsiella ictaluri (strain 93-146), this protein is Large ribosomal subunit protein bL9.